The sequence spans 217 residues: Adapter protein MecA (217 aa).

It belongs to the MecA family. As to quaternary structure, homodimer.

Its function is as follows. Enables the recognition and targeting of unfolded and aggregated proteins to the ClpC protease or to other proteins involved in proteolysis. The chain is Adapter protein MecA from Listeria welshimeri serovar 6b (strain ATCC 35897 / DSM 20650 / CCUG 15529 / CIP 8149 / NCTC 11857 / SLCC 5334 / V8).